Consider the following 337-residue polypeptide: Phenylalanine--tRNA ligase alpha subunit (337 aa).

A Mg(2+)-binding site is contributed by glutamate 258.

This sequence belongs to the class-II aminoacyl-tRNA synthetase family. Phe-tRNA synthetase alpha subunit type 1 subfamily. Tetramer of two alpha and two beta subunits. The cofactor is Mg(2+).

It localises to the cytoplasm. It carries out the reaction tRNA(Phe) + L-phenylalanine + ATP = L-phenylalanyl-tRNA(Phe) + AMP + diphosphate + H(+). The chain is Phenylalanine--tRNA ligase alpha subunit from Paraburkholderia phytofirmans (strain DSM 17436 / LMG 22146 / PsJN) (Burkholderia phytofirmans).